Consider the following 322-residue polypeptide: Probable cardiolipin synthase (CMP-forming) (322 aa).

Transmembrane regions (helical) follow at residues 143–163 (IGYVIVQGDFTLGMSLLAFAG), 199–219 (LVISLCYTDLLPMWLMGIVVF), and 289–309 (LQGLWYLTGLTTAATALSYVM).

This sequence belongs to the CDP-alcohol phosphatidyltransferase class-I family.

It localises to the mitochondrion inner membrane. The enzyme catalyses a CDP-1,2-diacyl-sn-glycerol + a 1,2-diacyl-sn-glycero-3-phospho-(1'-sn-glycerol) = a cardiolipin + CMP + H(+). Catalyzes the synthesis of cardiolipin (CL) (diphosphatidylglycerol) by specifically transferring a phosphatidyl group from CDP-diacylglycerol to phosphatidylglycerol (PG). CL is a key phospholipid in mitochondrial membranes and plays important roles in maintaining the functional integrity and dynamics of mitochondria under both optimal and stress conditions. In Drosophila melanogaster (Fruit fly), this protein is Probable cardiolipin synthase (CMP-forming) (CLS).